Reading from the N-terminus, the 288-residue chain is Elongation factor Ts (288 aa).

The interval 82 to 85 is involved in Mg(2+) ion dislocation from EF-Tu; the sequence is TDFV.

It belongs to the EF-Ts family.

It localises to the cytoplasm. Its function is as follows. Associates with the EF-Tu.GDP complex and induces the exchange of GDP to GTP. It remains bound to the aminoacyl-tRNA.EF-Tu.GTP complex up to the GTP hydrolysis stage on the ribosome. The sequence is that of Elongation factor Ts from Pelodictyon phaeoclathratiforme (strain DSM 5477 / BU-1).